The chain runs to 116 residues: Large ribosomal subunit protein uL18 (116 aa).

The protein belongs to the universal ribosomal protein uL18 family. In terms of assembly, part of the 50S ribosomal subunit; part of the 5S rRNA/L5/L18/L25 subcomplex. Contacts the 5S and 23S rRNAs.

This is one of the proteins that bind and probably mediate the attachment of the 5S RNA into the large ribosomal subunit, where it forms part of the central protuberance. This chain is Large ribosomal subunit protein uL18, found in Hahella chejuensis (strain KCTC 2396).